Reading from the N-terminus, the 204-residue chain is Large ribosomal subunit protein eL15z (204 aa).

The disordered stretch occupies residues 161–204; that stretch reads LRGLTSEGKKNRGLRGKGHNNHKNRPSRRATWKKNNSLSLRRYR. Positions 171-192 are enriched in basic residues; it reads NRGLRGKGHNNHKNRPSRRATW. Residues 193 to 204 are compositionally biased toward polar residues; that stretch reads KKNNSLSLRRYR.

This sequence belongs to the eukaryotic ribosomal protein eL15 family.

The chain is Large ribosomal subunit protein eL15z (RPL15A) from Arabidopsis thaliana (Mouse-ear cress).